A 301-amino-acid chain; its full sequence is Small ribosomal subunit biogenesis GTPase RsgA (301 aa).

The CP-type G domain maps to 65–224 (YNQLIRPKVA…LVDTPGFGNL (160 aa)). GTP is bound by residues 115 to 118 (SKYD) and 167 to 175 (GNSGVGKST). Zn(2+) contacts are provided by cysteine 247, cysteine 252, histidine 254, and cysteine 260.

Belongs to the TRAFAC class YlqF/YawG GTPase family. RsgA subfamily. Monomer. Associates with 30S ribosomal subunit, binds 16S rRNA. Zn(2+) is required as a cofactor.

It localises to the cytoplasm. One of several proteins that assist in the late maturation steps of the functional core of the 30S ribosomal subunit. Helps release RbfA from mature subunits. May play a role in the assembly of ribosomal proteins into the subunit. Circularly permuted GTPase that catalyzes slow GTP hydrolysis, GTPase activity is stimulated by the 30S ribosomal subunit. The chain is Small ribosomal subunit biogenesis GTPase RsgA from Ureaplasma urealyticum serovar 10 (strain ATCC 33699 / Western).